The chain runs to 185 residues: Ribosome-recycling factor (185 aa).

The protein belongs to the RRF family.

The protein resides in the cytoplasm. Its function is as follows. Responsible for the release of ribosomes from messenger RNA at the termination of protein biosynthesis. May increase the efficiency of translation by recycling ribosomes from one round of translation to another. The sequence is that of Ribosome-recycling factor from Geobacter metallireducens (strain ATCC 53774 / DSM 7210 / GS-15).